The sequence spans 400 residues: DNA polymerase IV (400 aa).

The UmuC domain maps to 5–187 (IFLVDMNAFF…LPVEFMNGIG (183 aa)). Residues aspartate 9 and aspartate 105 each contribute to the Mg(2+) site. Glutamate 106 is an active-site residue.

Belongs to the DNA polymerase type-Y family. Monomer. It depends on Mg(2+) as a cofactor.

It localises to the cytoplasm. It carries out the reaction DNA(n) + a 2'-deoxyribonucleoside 5'-triphosphate = DNA(n+1) + diphosphate. Functionally, poorly processive, error-prone DNA polymerase involved in untargeted mutagenesis. Copies undamaged DNA at stalled replication forks, which arise in vivo from mismatched or misaligned primer ends. These misaligned primers can be extended by PolIV. Exhibits no 3'-5' exonuclease (proofreading) activity. May be involved in translesional synthesis, in conjunction with the beta clamp from PolIII. The protein is DNA polymerase IV of Clostridium kluyveri (strain ATCC 8527 / DSM 555 / NBRC 12016 / NCIMB 10680 / K1).